A 204-amino-acid chain; its full sequence is Thymidylate kinase (204 aa).

9-16 contributes to the ATP binding site; sequence GLDGAGKS.

It belongs to the thymidylate kinase family.

The enzyme catalyses dTMP + ATP = dTDP + ADP. Phosphorylation of dTMP to form dTDP in both de novo and salvage pathways of dTTP synthesis. In Francisella philomiragia subsp. philomiragia (strain ATCC 25017 / CCUG 19701 / FSC 153 / O#319-036), this protein is Thymidylate kinase.